The sequence spans 542 residues: Calcium/calmodulin-dependent protein kinase type II subunit beta (542 aa).

The Protein kinase domain occupies 14 to 272 (YQLYEDIGKG…AHEALKHPWV (259 aa)). Residue Tyr17 is modified to Phosphotyrosine. Residues 20–28 (IGKGAFSVV) and Lys43 each bind ATP. The active-site Proton acceptor is the Asp136. Residues 283-292 (HRQETVECLK) form an autoinhibitory domain region. A Phosphothreonine; by autocatalysis modification is found at Thr287. Residues 291–301 (LKKFNARRKLK) form a calmodulin-binding region. Residues Thr306 and Thr307 each carry the phosphothreonine; by autocatalysis modification. A disordered region spans residues 349–407 (ADGVKPQTNSTKNSAAATSPKGTLPPAALEPQTTVIHNPVDGIKESSDSTHTTIEDEDT). Over residues 354 to 369 (PQTNSTKNSAAATSPK) the composition is skewed to polar residues. A phosphoserine mark is found at Ser367, Ser394, and Ser397. Residues Thr400 and Thr401 each carry the phosphothreonine modification.

The protein belongs to the protein kinase superfamily. CAMK Ser/Thr protein kinase family. CaMK subfamily. In terms of assembly, CAMK2 is composed of 4 different chains: alpha (CAMK2A), beta (CAMK2B), gamma (CAMK2G), and delta (CAMK2D). The different isoforms assemble into homo- or heteromultimeric holoenzymes composed of 12 subunits with two hexameric rings stacked one on top of the other. Interacts with SYNGAP1, CAMK2N2 and MPDZ. Interacts with FOXO3. Interacts (when in a kinase inactive state not associated with calmodulin) with ARC; leading to target ARC to inactive synapses. Interacts with CAMK2N1; this interaction requires CAMK2B activation by Ca(2+). Post-translationally, autophosphorylation of Thr-287 following activation by Ca(2+)/calmodulin. Phosphorylation of Thr-287 locks the kinase into an activated state.

It is found in the cytoplasm. The protein resides in the cytoskeleton. It localises to the microtubule organizing center. The protein localises to the centrosome. Its subcellular location is the sarcoplasmic reticulum membrane. It is found in the synapse. The enzyme catalyses L-seryl-[protein] + ATP = O-phospho-L-seryl-[protein] + ADP + H(+). It catalyses the reaction L-threonyl-[protein] + ATP = O-phospho-L-threonyl-[protein] + ADP + H(+). Activated by Ca(2+)/calmodulin. Binding of calmodulin results in conformational change that relieves intrasteric autoinhibition and allows autophosphorylation of Thr-287 which turns the kinase in a constitutively active form and confers to the kinase a Ca(2+)-independent activity. Its function is as follows. Calcium/calmodulin-dependent protein kinase that functions autonomously after Ca(2+)/calmodulin-binding and autophosphorylation, and is involved in dendritic spine and synapse formation, neuronal plasticity and regulation of sarcoplasmic reticulum Ca(2+) transport in skeletal muscle. In neurons, plays an essential structural role in the reorganization of the actin cytoskeleton during plasticity by binding and bundling actin filaments in a kinase-independent manner. This structural function is required for correct targeting of CaMK2A, which acts downstream of NMDAR to promote dendritic spine and synapse formation and maintain synaptic plasticity which enables long-term potentiation (LTP) and hippocampus-dependent learning. In developing hippocampal neurons, promotes arborization of the dendritic tree and in mature neurons, promotes dendritic remodeling. Also regulates the migration of developing neurons. Participates in the modulation of skeletal muscle function in response to exercise. In slow-twitch muscles, is involved in regulation of sarcoplasmic reticulum (SR) Ca(2+) transport and in fast-twitch muscle participates in the control of Ca(2+) release from the SR through phosphorylation of triadin, a ryanodine receptor-coupling factor, and phospholamban (PLN/PLB), an endogenous inhibitor of SERCA2A/ATP2A2. In response to interferon-gamma (IFN-gamma) stimulation, catalyzes phosphorylation of STAT1, stimulating the JAK-STAT signaling pathway. Phosphorylates reticulophagy regulator RETREG1 at 'Ser-147' under endoplasmic reticulum stress conditions which enhances RETREG1 oligomerization and its membrane scission and reticulophagy activity. The chain is Calcium/calmodulin-dependent protein kinase type II subunit beta (CAMK2B) from Bos taurus (Bovine).